The primary structure comprises 240 residues: uncharacterized protein (240 aa).

Residue Asp-66 is the Proton acceptor of the active site. Asp-129 is an active-site residue. The Proton acceptor role is filled by His-131.

This sequence belongs to the glucosamine/galactosamine-6-phosphate isomerase family.

This is an uncharacterized protein from Escherichia coli (strain K12).